The following is a 93-amino-acid chain: Leydig cell tumor 10 kDa protein (93 aa).

The interval 1–41 (MAQGQRKFQAQKPKSKAAAAERSRGPRKGGRVIGPKKARVV) is disordered. The span at 7–18 (KFQAQKPKSKAA) shows a compositional bias: low complexity. The span at 25 to 39 (GPRKGGRVIGPKKAR) shows a compositional bias: basic residues.

This sequence belongs to the UPF0390 family. As to expression, leydig cell tumor, testis and placenta.

In terms of biological role, may have a potential role in hypercalcemia of malignancy. This Rattus norvegicus (Rat) protein is Leydig cell tumor 10 kDa protein.